Here is a 159-residue protein sequence, read N- to C-terminus: Probable NADH dehydrogenase [ubiquinone] 1 alpha subcomplex subunit 12 (159 aa).

The protein belongs to the complex I NDUFA12 subunit family. As to quaternary structure, complex I is composed of at least 49 different subunits.

It localises to the mitochondrion inner membrane. Its function is as follows. Accessory subunit of the mitochondrial membrane respiratory chain NADH dehydrogenase (Complex I), that is believed not to be involved in catalysis. Complex I functions in the transfer of electrons from NADH to the respiratory chain. The immediate electron acceptor for the enzyme is believed to be ubiquinone. The sequence is that of Probable NADH dehydrogenase [ubiquinone] 1 alpha subcomplex subunit 12 from Arabidopsis thaliana (Mouse-ear cress).